Here is a 317-residue protein sequence, read N- to C-terminus: Probable methyltransferase tdiE (317 aa).

The protein belongs to the methyltransferase superfamily. LaeA methyltransferase family.

It participates in secondary metabolite biosynthesis. In terms of biological role, probable methyltransferase; part of the gene cluster that mediates the biosynthesis of terrequinone A, an antitumor agent. The first step in the biosynthetic pathway for terrequinone A is formation of indole pyruvic acid (IPA) from L-tryptophan by the aminotransferase tdiD. The nonribosomal peptide synthase tdiA then immediately converts unstable IPA to didemethylasterriquinone D (DDAQ D), via condensation of 2 IPA molecules. The symmetric connectivity of the 2 IPA molecules is thought to arise by head-to-tail dual Claisen condensations facilitated by the TE domain. TdiB then catalyzes reverse prenylation by transferring dimethylallyl diphosphate to carbon atom 2' of DDAQ D, to yield asterriquinone C-1. Finally, tdiC and tdiE enzymes robustly convert asterriquinone C-1 to terrequinone A via a transformation involving regular prenylation at carbon atom 5, which requires elimination of the hydroxy group on C-5. The polypeptide is Probable methyltransferase tdiE (Emericella nidulans (strain FGSC A4 / ATCC 38163 / CBS 112.46 / NRRL 194 / M139) (Aspergillus nidulans)).